A 256-amino-acid chain; its full sequence is MADYQNILTPCRFAPKPHHGVELPRGNWAEKARPIFVWLLGKIGDASSDHPPGVAGTVSAVLFAFAFLIIGANFLASVDWNPIEFIRLLPWLALEPPRPNWAWVLAPMNEGGWWQITGFFLTMSLLVWWWHVYNRARALGLGTHMAWAFASALFLYLTLGFIRPLLLGNWGEAVPFGLFAHLDWTAAFSLRYGNLYYNPFHMLSIAFLYGSAVLFAMHGATILAVSHLGGDREVEQITDRGTAAERAALFWRWTMG.

3 helical membrane passes run 52–78 (PGVA…LASV), 110–139 (EGGW…ARAL), and 142–167 (GTHM…PLLL). Residues His181 and His201 each contribute to the (7R,8Z)-bacteriochlorophyll b site. The chain crosses the membrane as a helical span at residues 197–225 (YNPFHMLSIAFLYGSAVLFAMHGATILAV). Fe cation-binding residues include His218 and Glu233. Residue Trp251 participates in a ubiquinone binding.

Belongs to the reaction center PufL/M/PsbA/D family. As to quaternary structure, reaction center is composed of four bacteriochlorophylls, two bacteriopheophytins, two ubiquinones, one iron, and two highly hydrophobic polypeptide chains (designated L and M).

The protein localises to the cellular chromatophore membrane. The reaction center is a membrane-bound complex that mediates the initial photochemical event in the electron transfer process of photosynthesis. The polypeptide is Reaction center protein M chain (pufM) (Pararhodospirillum photometricum (Rhodospirillum photometricum)).